Here is a 712-residue protein sequence, read N- to C-terminus: 3',5'-cyclic-AMP phosphodiesterase 4C (712 aa).

Disordered stretches follow at residues 1 to 31 and 45 to 64; these read MENLGVGEGAEACSRLSRSRGRHSMTRAPKH and RFYSDPDKSAGCRERDLSPR. Over residues 17-31 the composition is skewed to basic residues; that stretch reads SRSRGRHSMTRAPKH. The span at 48 to 64 shows a compositional bias: basic and acidic residues; sequence SDPDKSAGCRERDLSPR. S73 is subject to Phosphoserine. The interval 181–200 is disordered; the sequence is AKQGPVGNPSSSNQLPPAED. The PDEase domain occupies 312–641; that stretch reads VQTDQEEQLA…EWYQSKIPRS (330 aa). The active-site Proton donor is H388. H388 is a binding site for 3',5'-cyclic AMP. AMP contacts are provided by H388 and H392. The Zn(2+) site is built by H392, H428, D429, and D546. 4 residues coordinate AMP: D429, D546, Q597, and F600. D429 is a Mg(2+) binding site. D429 contributes to the Mn(2+) binding site. 3',5'-cyclic AMP contacts are provided by Q597 and F600. Disordered stretches follow at residues 636 to 655 and 664 to 712; these read SKIPRSPSDLTNPERDGPDR and EAEE…NQRT. S641 is subject to Phosphoserine. Residues 664 to 678 are compositionally biased toward acidic residues; it reads EAEEEDEEEEEEGEE.

It belongs to the cyclic nucleotide phosphodiesterase family. PDE4 subfamily. In terms of assembly, part of a complex containing AKAP5, ADCY5, ADCY6 and PKD2. Zn(2+) is required as a cofactor. Mg(2+) serves as cofactor. It depends on Mn(2+) as a cofactor. In terms of tissue distribution, expressed in various tissues but not in cells of the immune system.

It localises to the cell projection. The protein localises to the cilium. It carries out the reaction 3',5'-cyclic AMP + H2O = AMP + H(+). It functions in the pathway purine metabolism; 3',5'-cyclic AMP degradation; AMP from 3',5'-cyclic AMP: step 1/1. Inhibited by rolipram. Hydrolyzes the second messenger cAMP, which is a key regulator of many important physiological processes. The sequence is that of 3',5'-cyclic-AMP phosphodiesterase 4C from Homo sapiens (Human).